A 178-amino-acid polypeptide reads, in one-letter code: Large ribosomal subunit protein uL10 (178 aa).

This sequence belongs to the universal ribosomal protein uL10 family. In terms of assembly, part of the ribosomal stalk of the 50S ribosomal subunit. The N-terminus interacts with L11 and the large rRNA to form the base of the stalk. The C-terminus forms an elongated spine to which L12 dimers bind in a sequential fashion forming a multimeric L10(L12)X complex.

Forms part of the ribosomal stalk, playing a central role in the interaction of the ribosome with GTP-bound translation factors. This is Large ribosomal subunit protein uL10 from Thermosynechococcus vestitus (strain NIES-2133 / IAM M-273 / BP-1).